Consider the following 401-residue polypeptide: Glyceraldehyde-3-phosphate dehydrogenase A, chloroplastic (401 aa).

The transit peptide at 1-65 (MASNMLSIAN…RSSQNGVVEA (65 aa)) directs the protein to the chloroplast. NADP(+) contacts are provided by residues 76-77 (RI), Asp100, and Arg145. Residues 217–219 (SCT), Thr248, Arg263, 276–277 (TG), and Arg299 contribute to the D-glyceraldehyde 3-phosphate site. Residue Cys218 is the Nucleophile of the active site. Asn381 lines the NADP(+) pocket.

Belongs to the glyceraldehyde-3-phosphate dehydrogenase family. As to quaternary structure, tetramer of either four A chains (GAPDH 2) or two A and two B chains (GAPDH 1).

The protein resides in the plastid. Its subcellular location is the chloroplast. The enzyme catalyses D-glyceraldehyde 3-phosphate + phosphate + NADP(+) = (2R)-3-phospho-glyceroyl phosphate + NADPH + H(+). It participates in carbohydrate biosynthesis; Calvin cycle. The protein is Glyceraldehyde-3-phosphate dehydrogenase A, chloroplastic (GAPA) of Spinacia oleracea (Spinach).